Reading from the N-terminus, the 96-residue chain is Protein Vpr (96 aa).

The homooligomerization stretch occupies residues 1–42 (MEQAPEDQGPQREPHNEWTLELLEELKNEAVRHFPRIWLHGL). Residues S79, S94, and S96 each carry the phosphoserine; by host modification.

The protein belongs to the HIV-1 VPR protein family. Homooligomer, may form homodimer. Interacts with p6-gag region of the Pr55 Gag precursor protein through a (Leu-X-X)4 motif near the C-terminus of the P6gag protein. Interacts with host UNG. May interact with host RAD23A/HHR23A. Interacts with host VPRBP/DCAF1, leading to hijack the CUL4A-RBX1-DDB1-DCAF1/VPRBP complex, mediating ubiquitination of host proteins such as TERT and ZGPAT and arrest of the cell cycle in G2 phase. Post-translationally, phosphorylated on several residues by host. These phosphorylations regulate VPR activity for the nuclear import of the HIV-1 pre-integration complex.

It is found in the virion. It localises to the host nucleus. The protein resides in the host extracellular space. Functionally, during virus entry, plays a role in the transport of the viral pre-integration (PIC) complex to the host nucleus. This function is crucial for viral infection of non-dividing macrophages. May act directly at the nuclear pore complex, by binding nucleoporins phenylalanine-glycine (FG)-repeat regions. In terms of biological role, during virus replication, may deplete host UNG protein, and incude G2-M cell cycle arrest. Acts by targeting specific host proteins for degradation by the 26S proteasome, through association with the cellular CUL4A-DDB1 E3 ligase complex by direct interaction with host VPRPB/DCAF-1. Cell cycle arrest reportedly occurs within hours of infection and is not blocked by antiviral agents, suggesting that it is initiated by the VPR carried into the virion. Additionally, VPR induces apoptosis in a cell cycle dependent manner suggesting that these two effects are mechanistically linked. Detected in the serum and cerebrospinal fluid of AIDS patient, VPR may also induce cell death to bystander cells. This Human immunodeficiency virus type 1 group M subtype B (isolate BRU/LAI) (HIV-1) protein is Protein Vpr.